The chain runs to 275 residues: Glutamate racemase (275 aa).

Substrate-binding positions include 10–11 (DS) and 42–43 (YG). Catalysis depends on Cys-74, which acts as the Proton donor/acceptor. 75–76 (NT) is a substrate binding site. Residue Cys-189 is the Proton donor/acceptor of the active site. 190–191 (TH) provides a ligand contact to substrate.

Belongs to the aspartate/glutamate racemases family.

It catalyses the reaction L-glutamate = D-glutamate. Its pathway is cell wall biogenesis; peptidoglycan biosynthesis. Functionally, provides the (R)-glutamate required for cell wall biosynthesis. In Bartonella tribocorum (strain CIP 105476 / IBS 506), this protein is Glutamate racemase.